The sequence spans 1429 residues: DNA-directed RNA polymerase subunit beta' (1429 aa).

Zn(2+) is bound by residues Cys-68, Cys-70, Cys-83, and Cys-86. 3 residues coordinate Mg(2+): Asp-459, Asp-461, and Asp-463. The Zn(2+) site is built by Cys-805, Cys-879, Cys-886, and Cys-889. The interval 1407 to 1429 (ESFPLLGGDGEPASTTSSTTEGE) is disordered. The span at 1419–1429 (ASTTSSTTEGE) shows a compositional bias: polar residues.

The protein belongs to the RNA polymerase beta' chain family. As to quaternary structure, the RNAP catalytic core consists of 2 alpha, 1 beta, 1 beta' and 1 omega subunit. When a sigma factor is associated with the core the holoenzyme is formed, which can initiate transcription. The cofactor is Mg(2+). It depends on Zn(2+) as a cofactor.

The enzyme catalyses RNA(n) + a ribonucleoside 5'-triphosphate = RNA(n+1) + diphosphate. Its function is as follows. DNA-dependent RNA polymerase catalyzes the transcription of DNA into RNA using the four ribonucleoside triphosphates as substrates. The sequence is that of DNA-directed RNA polymerase subunit beta' from Rhodopirellula baltica (strain DSM 10527 / NCIMB 13988 / SH1).